The primary structure comprises 475 residues: Lipoprotein lipase (475 aa).

The first 27 residues, 1–27 (MESKALLVLTLAVWLQSLTASRGGVAA), serve as a signal peptide directing secretion. The interaction with GPIHBP1 stretch occupies residues 32-53 (RDFIDIESKFALRTPEDTAEDT). Cys54 and Cys67 are oxidised to a cystine. N-linked (GlcNAc...) asparagine glycosylation occurs at Asn70. 3'-nitrotyrosine is present on Tyr121. Catalysis depends on Ser159, which acts as the Nucleophile. The Charge relay system role is filled by Asp183. 3'-nitrotyrosine is present on Tyr191. 4 residues coordinate Ca(2+): Ala194, Arg197, Ser199, and Asp202. The cysteines at positions 243 and 266 are disulfide-linked. Positions 243-266 (CNIGEAIRVIAERGLGDVDQLVKC) are essential for determining substrate specificity. His268 (charge relay system) is an active-site residue. Intrachain disulfides connect Cys291/Cys310 and Cys302/Cys305. The PLAT domain maps to 341 to 464 (FHYQVKIHFS…KGKAPAVFVK (124 aa)). Tyr343 is modified (3'-nitrotyrosine). Asn386 is a glycosylation site (N-linked (GlcNAc...) asparagine). An important for interaction with lipoprotein particles region spans residues 417–421 (WSDWW). Positions 430–434 (KIRVK) are important for heparin binding. The segment at 443-467 (IFCSREKVSHLQKGKAPAVFVKCHD) is interaction with GPIHBP1. Cys445 and Cys465 form a disulfide bridge.

It belongs to the AB hydrolase superfamily. Lipase family. In terms of assembly, homodimer. Interacts with GPIHBP1 with 1:1 stoichiometry. Interacts with APOC2; the interaction activates LPL activity in the presence of lipids. Interaction with heparan sulfate proteoglycans is required to protect LPL against loss of activity. Associates with lipoprotein particles in blood plasma. Interacts with LMF1 and SEL1L; interaction with SEL1L is required to prevent aggregation of newly synthesized LPL in the endoplasmic reticulum (ER), and for normal export of LPL from the ER to the extracellular space. Interacts with SORL1; SORL1 acts as a sorting receptor, promoting LPL localization to endosomes and later to lysosomes, leading to degradation of newly synthesized LPL. Post-translationally, tyrosine nitration after lipopolysaccharide (LPS) challenge down-regulates the lipase activity. In terms of tissue distribution, detected in blood plasma. Detected in milk (at protein level).

The protein localises to the cell membrane. Its subcellular location is the secreted. The protein resides in the extracellular space. It is found in the extracellular matrix. The enzyme catalyses a triacylglycerol + H2O = a diacylglycerol + a fatty acid + H(+). The catalysed reaction is a 1,2-diacyl-sn-glycero-3-phosphocholine + H2O = a 2-acyl-sn-glycero-3-phosphocholine + a fatty acid + H(+). It carries out the reaction 1,2,3-tri-(9Z-octadecenoyl)-glycerol + H2O = di-(9Z)-octadecenoylglycerol + (9Z)-octadecenoate + H(+). It catalyses the reaction 1,2-di-(9Z-octadecenoyl)-sn-glycero-3-phosphocholine + H2O = (9Z-octadecenoyl)-sn-glycero-3-phosphocholine + (9Z)-octadecenoate + H(+). The enzyme catalyses 1,2,3-tributanoylglycerol + H2O = dibutanoylglycerol + butanoate + H(+). The catalysed reaction is 1,2-dihexadecanoyl-sn-glycero-3-phosphocholine + H2O = hexadecanoyl-sn-glycero-3-phosphocholine + hexadecanoate + H(+). The apolipoprotein APOC2 acts as a coactivator of LPL activity. Ca(2+) binding promotes protein stability and formation of the active homodimer. Interaction with GPIHBP1 protects LPL against inactivation by ANGPTL4. Inhibited by NaCl. In terms of biological role, key enzyme in triglyceride metabolism. Catalyzes the hydrolysis of triglycerides from circulating chylomicrons and very low density lipoproteins (VLDL), and thereby plays an important role in lipid clearance from the blood stream, lipid utilization and storage. Although it has both phospholipase and triglyceride lipase activities it is primarily a triglyceride lipase with low but detectable phospholipase activity. Mediates margination of triglyceride-rich lipoprotein particles in capillaries. Recruited to its site of action on the luminal surface of vascular endothelium by binding to GPIHBP1 and cell surface heparan sulfate proteoglycans. In Homo sapiens (Human), this protein is Lipoprotein lipase (LPL).